A 220-amino-acid chain; its full sequence is Ribosomal RNA large subunit methyltransferase E (220 aa).

5 residues coordinate S-adenosyl-L-methionine: Gly60, Trp62, Asp92, Asp108, and Asp133. Lys173 (proton acceptor) is an active-site residue.

It belongs to the class I-like SAM-binding methyltransferase superfamily. RNA methyltransferase RlmE family.

Its subcellular location is the cytoplasm. The enzyme catalyses uridine(2552) in 23S rRNA + S-adenosyl-L-methionine = 2'-O-methyluridine(2552) in 23S rRNA + S-adenosyl-L-homocysteine + H(+). Its function is as follows. Specifically methylates the uridine in position 2552 of 23S rRNA at the 2'-O position of the ribose in the fully assembled 50S ribosomal subunit. This Paraburkholderia phytofirmans (strain DSM 17436 / LMG 22146 / PsJN) (Burkholderia phytofirmans) protein is Ribosomal RNA large subunit methyltransferase E.